The primary structure comprises 471 residues: Putative multidrug resistance protein MdtD (471 aa).

The Periplasmic segment spans residues 1–12 (MTDLPDSTRWQL). A helical transmembrane segment spans residues 13–33 (WIVAFGFFMQSLDTTIVNTAI). Topologically, residues 34 to 48 (PSMAQSLGESPLHMH) are cytoplasmic. A helical transmembrane segment spans residues 49–69 (MVIVSYVLTVAVMLPASGWLA). Over 70–76 (DKVGVRN) the chain is Periplasmic. Residues 77–97 (IFFTAIVLFTLGSLFCALSGT) form a helical membrane-spanning segment. Over 98 to 101 (LNEL) the chain is Cytoplasmic. The helical transmembrane segment at 102–124 (LLARALQGVGGAMMVPVGRLTVM) threads the bilayer. The Periplasmic portion of the chain corresponds to 125-137 (KIVPREQYMAAMT). A helical transmembrane segment spans residues 138–158 (FVTLPGQVGPLLGPALGGLLV). Over 159–164 (EYASWH) the chain is Cytoplasmic. A helical membrane pass occupies residues 165–185 (WIFLINIPVGIIGAIATLMLM). At 186–196 (PNYTMQTRRFD) the chain is on the periplasmic side. Residues 197-217 (LSGFLLLAVGMAVLTLALDGS) form a helical membrane-spanning segment. Residues 218–224 (KGTGLSP) are Cytoplasmic-facing. Residues 225 to 245 (LAIAGLVAVGVVALVLYLLHA) form a helical membrane-spanning segment. Over 246 to 262 (RNNNRALFSLKLFRTRT) the chain is Periplasmic. Residues 263 to 283 (FSLGLAGSFAGRIGSGMLPFM) form a helical membrane-spanning segment. Residues 284 to 285 (TP) are Cytoplasmic-facing. A helical membrane pass occupies residues 286 to 306 (VFLQIGLGFSPFHAGLMMIPM). Over 307–341 (VLGSMGMKRIVVQVVNRFGYRRVLVATTLGLSLVT) the chain is Periplasmic. Residues 342–362 (LLFMTTALLGWYYVLPFVLFL) form a helical membrane-spanning segment. The Cytoplasmic portion of the chain corresponds to 363-395 (QGMVNSTRFSSMNTLTLKDLPDNLASSGNSLLS). The helical transmembrane segment at 396–416 (MIMQLSMSIGVTIAGLLLGLF) threads the bilayer. Over 417–430 (GSQHVSVDSGTTQT) the chain is Periplasmic. The chain crosses the membrane as a helical span at residues 431-451 (VFMYTWLSMAFIIALPAFIFA). The Cytoplasmic portion of the chain corresponds to 452–471 (RVPNDTHQNVAISRRKRSAQ).

Belongs to the major facilitator superfamily. TCR/Tet family.

It localises to the cell inner membrane. This chain is Putative multidrug resistance protein MdtD, found in Shigella flexneri serotype 5b (strain 8401).